The sequence spans 173 residues: Disulfide bond formation protein B (173 aa).

Residues 1–11 are Cytoplasmic-facing; that stretch reads MNALQWSFRAQ. A helical membrane pass occupies residues 12–28; that stretch reads CLTGFLFCTGLLAYAIF. The Periplasmic portion of the chain corresponds to 29–46; that stretch reads LQLHQGLEPCPLCIFQRI. The cysteines at positions 38 and 41 are disulfide-linked. The helical transmembrane segment at 47-63 threads the bilayer; that stretch reads AFAVLGILFLIAGLYNS. The Cytoplasmic segment spans residues 64–70; the sequence is SNVYTRK. Residues 71 to 88 form a helical membrane-spanning segment; the sequence is AYGLLIFLTAIIGTGIAG. The Periplasmic segment spans residues 89–145; it reads RHVWVQLMPHNTISSCGSPLSFLSETMGPFEVFRTVLTGTSNCGNIDWRFLGLSMPM. A disulfide bridge links Cys104 with Cys131. The chain crosses the membrane as a helical span at residues 146–164; it reads WSMFWFVALALLGLLVGFK. At 165 to 173 the chain is on the cytoplasmic side; it reads AERRKPLFS.

It belongs to the DsbB family.

Its subcellular location is the cell inner membrane. In terms of biological role, required for disulfide bond formation in some periplasmic proteins. Acts by oxidizing the DsbA protein. This Xylella fastidiosa (strain Temecula1 / ATCC 700964) protein is Disulfide bond formation protein B.